A 100-amino-acid chain; its full sequence is Sweet protein mabinlin-4 (100 aa).

Disulfide bonds link Cys4–Cys49, Cys17–Cys38, Cys39–Cys87, and Cys51–Cys95.

This sequence belongs to the 2S seed storage albumins family. As to quaternary structure, heterodimer of a small A and a large B chain linked by disulfide bonds.

Functionally, heat stable 2S seed storage protein having sweetness-inducing activity. This is Sweet protein mabinlin-4 from Capparis masaikai (Mabinlang).